The following is a 279-amino-acid chain: MMTQMNYTGKVKRVAIIANGKYQSKRVASKLFSVFKDDPDFYLSKKNPDIVISIGGDGMLLSAFHMYEKELDKVRFVGIHTGHLGFYTDYRDFEVDKLIDNLRKDKGEQISYPILKVAITLDDGRVVKARALNEATVKRIEKTMVADVIINHVKFESFRGDGISVSTPTGSTAYNKSLGGAVLHPTIEALQLTEISSLNNRVFRTLGSSIIIPKKDKIELVPKRLGIYTISIDNKTYQLKNVTKVEYFIDDEKIHFVSSPSHTSFWERVKDAFIGEIDS.

Asp-57 (proton acceptor) is an active-site residue. Residues Asp-57–Gly-58, Asn-133–Glu-134, Arg-159, Asp-161, and Thr-172–Ser-177 each bind NAD(+).

It belongs to the NAD kinase family. It depends on a divalent metal cation as a cofactor.

It is found in the cytoplasm. The catalysed reaction is NAD(+) + ATP = ADP + NADP(+) + H(+). Involved in the regulation of the intracellular balance of NAD and NADP, and is a key enzyme in the biosynthesis of NADP. Catalyzes specifically the phosphorylation on 2'-hydroxyl of the adenosine moiety of NAD to yield NADP. The polypeptide is NAD kinase (Streptococcus pyogenes serotype M2 (strain MGAS10270)).